We begin with the raw amino-acid sequence, 238 residues long: Putative ABC transporter ATP-binding protein AF_1841 (238 aa).

Residues 8–238 enclose the ABC transporter domain; the sequence is IEADSVSYDY…EELLEKAGVI (231 aa). Residue 41 to 48 coordinates ATP; that stretch reads GANGSGKS.

The protein belongs to the ABC transporter superfamily.

The protein resides in the cell membrane. Its function is as follows. Probably part of an ABC transporter complex. Responsible for energy coupling to the transport system. The polypeptide is Putative ABC transporter ATP-binding protein AF_1841 (Archaeoglobus fulgidus (strain ATCC 49558 / DSM 4304 / JCM 9628 / NBRC 100126 / VC-16)).